Here is a 275-residue protein sequence, read N- to C-terminus: NH(3)-dependent NAD(+) synthetase (275 aa).

50–57 (GISGGVDS) serves as a coordination point for ATP. A Mg(2+)-binding site is contributed by D56. Deamido-NAD(+) is bound at residue R147. T167 contacts ATP. E172 serves as a coordination point for Mg(2+). K180 and D187 together coordinate deamido-NAD(+). ATP is bound by residues K196 and T218. 267-268 (HK) provides a ligand contact to deamido-NAD(+).

The protein belongs to the NAD synthetase family. In terms of assembly, homodimer.

It carries out the reaction deamido-NAD(+) + NH4(+) + ATP = AMP + diphosphate + NAD(+) + H(+). It functions in the pathway cofactor biosynthesis; NAD(+) biosynthesis; NAD(+) from deamido-NAD(+) (ammonia route): step 1/1. Its function is as follows. Catalyzes the ATP-dependent amidation of deamido-NAD to form NAD. Uses ammonia as a nitrogen source. The chain is NH(3)-dependent NAD(+) synthetase from Ectopseudomonas mendocina (strain ymp) (Pseudomonas mendocina).